Here is a 291-residue protein sequence, read N- to C-terminus: 4-hydroxy-tetrahydrodipicolinate synthase (291 aa).

Residue T45 coordinates pyruvate. Y133 functions as the Proton donor/acceptor in the catalytic mechanism. The active-site Schiff-base intermediate with substrate is K161. I203 contacts pyruvate.

Belongs to the DapA family. Homotetramer; dimer of dimers.

Its subcellular location is the cytoplasm. It carries out the reaction L-aspartate 4-semialdehyde + pyruvate = (2S,4S)-4-hydroxy-2,3,4,5-tetrahydrodipicolinate + H2O + H(+). The protein operates within amino-acid biosynthesis; L-lysine biosynthesis via DAP pathway; (S)-tetrahydrodipicolinate from L-aspartate: step 3/4. In terms of biological role, catalyzes the condensation of (S)-aspartate-beta-semialdehyde [(S)-ASA] and pyruvate to 4-hydroxy-tetrahydrodipicolinate (HTPA). The chain is 4-hydroxy-tetrahydrodipicolinate synthase from Neisseria meningitidis serogroup C / serotype 2a (strain ATCC 700532 / DSM 15464 / FAM18).